Reading from the N-terminus, the 101-residue chain is Protein Tat (101 aa).

Residues methionine 1–lysine 24 are interaction with human CREBBP. Residues methionine 1–glycine 48 form a transactivation region. The Zn(2+) site is built by cysteine 22, cysteine 25, and cysteine 27. The tract at residues cysteine 22–cysteine 37 is cysteine-rich. At lysine 28 the chain carries N6-acetyllysine; by host PCAF. Zn(2+) is bound by residues cysteine 30, histidine 33, cysteine 34, and cysteine 37. Positions phenylalanine 38–glycine 48 are core. Residues glycine 48 to aspartate 101 are disordered. Residues arginine 49–glycine 57 carry the Nuclear localization signal, RNA-binding (TAR), and protein transduction motif. The segment at arginine 49 to lysine 86 is interaction with the host capping enzyme RNGTT. Lysine 50 and lysine 51 each carry N6-acetyllysine; by host EP300 and GCN5L2. Residues arginine 52 and arginine 53 each carry the asymmetric dimethylarginine; by host PRMT6 modification. A Glycyl lysine isopeptide (Lys-Gly) (interchain with G-Cter in ubiquitin) cross-link involves residue lysine 71. Over residues glutamate 85–aspartate 101 the composition is skewed to basic and acidic residues.

Belongs to the lentiviruses Tat family. Interacts with host CCNT1. Associates with the P-TEFb complex composed at least of Tat, P-TEFb (CDK9 and CCNT1), TAR RNA, RNA Pol II. Recruits the HATs CREBBP, TAF1/TFIID, EP300, PCAF and GCN5L2. Interacts with host KAT5/Tip60; this interaction targets the latter to degradation. Interacts with the host deacetylase SIRT1. Interacts with host capping enzyme RNGTT; this interaction stimulates RNGTT. Binds to host KDR, and to the host integrins ITGAV/ITGB3 and ITGA5/ITGB1. Interacts with host KPNB1/importin beta-1 without previous binding to KPNA1/importin alpha-1. Interacts with EIF2AK2. Interacts with host nucleosome assembly protein NAP1L1; this interaction may be required for the transport of Tat within the nucleus, since the two proteins interact at the nuclear rim. Interacts with host C1QBP/SF2P32; this interaction involves lysine-acetylated Tat. Interacts with the host chemokine receptors CCR2, CCR3 and CXCR4. Interacts with host DPP4/CD26; this interaction may trigger an anti-proliferative effect. Interacts with host LDLR. Interacts with the host extracellular matrix metalloproteinase MMP1. Interacts with host PRMT6; this interaction mediates Tat's methylation. Interacts with, and is ubiquitinated by MDM2/Hdm2. Interacts with host PSMC3 and HTATIP2. Interacts with STAB1; this interaction may overcome SATB1-mediated repression of IL2 and IL2RA (interleukin) in T cells by binding to the same domain than HDAC1. Interacts (when acetylated) with human CDK13, thereby increasing HIV-1 mRNA splicing and promoting the production of the doubly spliced HIV-1 protein Nef. Interacts with host TBP; this interaction modulates the activity of transcriptional pre-initiation complex. Interacts with host RELA. Interacts with host PLSCR1; this interaction negatively regulates Tat transactivation activity by altering its subcellular distribution. Asymmetrical arginine methylation by host PRMT6 seems to diminish the transactivation capacity of Tat and affects the interaction with host CCNT1. Post-translationally, acetylation by EP300, CREBBP, GCN5L2/GCN5 and PCAF regulates the transactivation activity of Tat. EP300-mediated acetylation of Lys-50 promotes dissociation of Tat from the TAR RNA through the competitive binding to PCAF's bromodomain. In addition, the non-acetylated Tat's N-terminus can also interact with PCAF. PCAF-mediated acetylation of Lys-28 enhances Tat's binding to CCNT1. Lys-50 is deacetylated by SIRT1. In terms of processing, polyubiquitination by host MDM2 does not target Tat to degradation, but activates its transactivation function and fosters interaction with CCNT1 and TAR RNA. Phosphorylated by EIF2AK2 on serine and threonine residues adjacent to the basic region important for TAR RNA binding and function. Phosphorylation of Tat by EIF2AK2 is dependent on the prior activation of EIF2AK2 by dsRNA.

It localises to the host nucleus. It is found in the host nucleolus. Its subcellular location is the host cytoplasm. The protein localises to the secreted. Functionally, transcriptional activator that increases RNA Pol II processivity, thereby increasing the level of full-length viral transcripts. Recognizes a hairpin structure at the 5'-LTR of the nascent viral mRNAs referred to as the transactivation responsive RNA element (TAR) and recruits the cyclin T1-CDK9 complex (P-TEFb complex) that will in turn hyperphosphorylate the RNA polymerase II to allow efficient elongation. The CDK9 component of P-TEFb and other Tat-activated kinases hyperphosphorylate the C-terminus of RNA Pol II that becomes stabilized and much more processive. Other factors such as HTATSF1/Tat-SF1, SUPT5H/SPT5, and HTATIP2 are also important for Tat's function. Besides its effect on RNA Pol II processivity, Tat induces chromatin remodeling of proviral genes by recruiting the histone acetyltransferases (HATs) CREBBP, EP300 and PCAF to the chromatin. This also contributes to the increase in proviral transcription rate, especially when the provirus integrates in transcriptionally silent region of the host genome. To ensure maximal activation of the LTR, Tat mediates nuclear translocation of NF-kappa-B by interacting with host RELA. Through its interaction with host TBP, Tat may also modulate transcription initiation. Tat can reactivate a latently infected cell by penetrating in it and transactivating its LTR promoter. In the cytoplasm, Tat is thought to act as a translational activator of HIV-1 mRNAs. Extracellular circulating Tat can be endocytosed by surrounding uninfected cells via the binding to several surface receptors such as CD26, CXCR4, heparan sulfate proteoglycans (HSPG) or LDLR. Neurons are rarely infected, but they internalize Tat via their LDLR. Through its interaction with nuclear HATs, Tat is potentially able to control the acetylation-dependent cellular gene expression. Modulates the expression of many cellular genes involved in cell survival, proliferation or in coding for cytokines or cytokine receptors. Tat plays a role in T-cell and neurons apoptosis. Tat induced neurotoxicity and apoptosis probably contribute to neuroAIDS. Circulating Tat also acts as a chemokine-like and/or growth factor-like molecule that binds to specific receptors on the surface of the cells, affecting many cellular pathways. In the vascular system, Tat binds to ITGAV/ITGB3 and ITGA5/ITGB1 integrins dimers at the surface of endothelial cells and competes with bFGF for heparin-binding sites, leading to an excess of soluble bFGF. In Homo sapiens (Human), this protein is Protein Tat.